Consider the following 93-residue polypeptide: Mitochondrial import inner membrane translocase subunit Tim10-A (93 aa).

Positions 32-57 (CHKKCVPPHYKEAELSKGESVCLDRC) match the Twin CX3C motif motif. 2 cysteine pairs are disulfide-bonded: C32-C57 and C36-C53.

The protein belongs to the small Tim family. As to quaternary structure, heterohexamer; composed of 3 copies of TIMM9 and 3 copies of TIMM10/TIM10A, named soluble 70 kDa complex. The complex forms a 6-bladed alpha-propeller structure and associates with the TIMM22 component of the TIM22 complex. Interacts with multi-pass transmembrane proteins in transit.

It is found in the mitochondrion inner membrane. Its function is as follows. Mitochondrial intermembrane chaperone that participates in the import and insertion of multi-pass transmembrane proteins into the mitochondrial inner membrane. May also be required for the transfer of beta-barrel precursors from the TOM complex to the sorting and assembly machinery (SAM complex) of the outer membrane. Acts as a chaperone-like protein that protects the hydrophobic precursors from aggregation and guide them through the mitochondrial intermembrane space. In Xenopus laevis (African clawed frog), this protein is Mitochondrial import inner membrane translocase subunit Tim10-A (timm10-a).